The sequence spans 430 residues: Dihydroorotase (430 aa).

Zn(2+) is bound by residues histidine 60 and histidine 62. Substrate contacts are provided by residues 62-64 (HLR) and asparagine 94. Zn(2+)-binding residues include aspartate 152, histidine 179, histidine 232, and aspartate 305. The active site involves aspartate 305. Substrate contacts are provided by residues histidine 309 and 323 to 324 (FG).

Belongs to the metallo-dependent hydrolases superfamily. DHOase family. Class I DHOase subfamily. Requires Zn(2+) as cofactor.

The catalysed reaction is (S)-dihydroorotate + H2O = N-carbamoyl-L-aspartate + H(+). Its pathway is pyrimidine metabolism; UMP biosynthesis via de novo pathway; (S)-dihydroorotate from bicarbonate: step 3/3. In terms of biological role, catalyzes the reversible cyclization of carbamoyl aspartate to dihydroorotate. The sequence is that of Dihydroorotase from Solibacter usitatus (strain Ellin6076).